The sequence spans 109 residues: Flagellar hook-basal body complex protein FliE 2 (109 aa).

The protein belongs to the FliE family.

The protein resides in the bacterial flagellum basal body. The polypeptide is Flagellar hook-basal body complex protein FliE 2 (fliE2) (Bradyrhizobium diazoefficiens (strain JCM 10833 / BCRC 13528 / IAM 13628 / NBRC 14792 / USDA 110)).